Reading from the N-terminus, the 56-residue chain is Ovomucoid (56 aa).

In terms of domain architecture, Kazal-like spans 6-56 (VDCSDHPKPACLQEQKPLCGSDNKTYDNKCSFCNAVVDSNGTLTLSHFGKC). Intrachain disulfides connect Cys8–Cys38, Cys16–Cys35, and Cys24–Cys56. An N-linked (GlcNAc...) asparagine glycan is attached at Asn45.

Its subcellular location is the secreted. This chain is Ovomucoid, found in Penelope jacquacu (Spix's guan).